Consider the following 140-residue polypeptide: Mialostatin (140 aa).

Positions 1–18 (MAFFKSAVFLVCVVLAAA) are cleaved as a signal peptide. Disulfide bonds link Cys-90/Cys-103 and Cys-114/Cys-134.

The protein belongs to the cystatin family. As to expression, expressed in midgut (at protein level).

Its subcellular location is the secreted. In terms of biological role, inhibitor of cysteine proteinases. Inhibits several endogenous midgut digestive cysteine proteases, such as cathepsin L1, L3, B and C, but not aspartic protease cathepsin D1 and cysteine protease legumain. Inhibits proteolysis of blood proteins catalyzed by tick gut cysteine cathepsins. Inhibits host cathepsin B (CSTB), C (CTSC), H (CTSH), K (CTSK), L (CTSL) and S (CTSS). In Ixodes ricinus (Common tick), this protein is Mialostatin.